The primary structure comprises 512 residues: 2-isopropylmalate synthase (512 aa).

The Pyruvate carboxyltransferase domain maps to 5–267; the sequence is VVIFDTTLRD…ETSINKSEIY (263 aa). Mn(2+)-binding residues include Asp-14, His-202, His-204, and Asn-238. The segment at 391-512 is regulatory domain; that stretch reads SLEYLHITSG…LPKAKTERAV (122 aa).

The protein belongs to the alpha-IPM synthase/homocitrate synthase family. LeuA type 1 subfamily. As to quaternary structure, homodimer. The cofactor is Mn(2+).

Its subcellular location is the cytoplasm. The catalysed reaction is 3-methyl-2-oxobutanoate + acetyl-CoA + H2O = (2S)-2-isopropylmalate + CoA + H(+). It participates in amino-acid biosynthesis; L-leucine biosynthesis; L-leucine from 3-methyl-2-oxobutanoate: step 1/4. Functionally, catalyzes the condensation of the acetyl group of acetyl-CoA with 3-methyl-2-oxobutanoate (2-ketoisovalerate) to form 3-carboxy-3-hydroxy-4-methylpentanoate (2-isopropylmalate). The protein is 2-isopropylmalate synthase of Heliobacterium modesticaldum (strain ATCC 51547 / Ice1).